The sequence spans 339 residues: Putative methylthioribose-1-phosphate isomerase (339 aa).

Substrate contacts are provided by residues 43–45 (RGA), Arg86, and Gln191. Asp232 acts as the Proton donor in catalysis. 241 to 242 (NK) serves as a coordination point for substrate.

Belongs to the eIF-2B alpha/beta/delta subunits family. MtnA subfamily.

It catalyses the reaction 5-(methylsulfanyl)-alpha-D-ribose 1-phosphate = 5-(methylsulfanyl)-D-ribulose 1-phosphate. Functionally, catalyzes the interconversion of methylthioribose-1-phosphate (MTR-1-P) into methylthioribulose-1-phosphate (MTRu-1-P). The polypeptide is Putative methylthioribose-1-phosphate isomerase (Archaeoglobus fulgidus (strain ATCC 49558 / DSM 4304 / JCM 9628 / NBRC 100126 / VC-16)).